Here is a 701-residue protein sequence, read N- to C-terminus: Sodium/hydrogen exchanger 6 (701 aa).

2 consecutive transmembrane segments (helical) span residues 71–91 and 103–123; these read SANL…IWLF and GLAM…IHVP. An N-linked (GlcNAc...) asparagine glycan is attached at asparagine 128. 8 helical membrane-spanning segments follow: residues 176–196, 211–231, 252–272, 278–298, 324–344, 372–392, 414–434, and 436–456; these read VTFD…FYAG, ILAY…SIMY, CLLF…AIFH, VELY…AIVL, IGIF…TGVV, TFLL…FCGI, FELL…LTLF, and FQNH…IFLG. Lysine 475 participates in a covalent cross-link: Glycyl lysine isopeptide (Lys-Gly) (interchain with G-Cter in ubiquitin). Helical transmembrane passes span 479–499 and 515–535; these read NFQH…ALAI and LLIV…MLSC.

It belongs to the monovalent cation:proton antiporter 1 (CPA1) transporter (TC 2.A.36) family. As to quaternary structure, homodimer. Interacts with RACK1; regulates the distribution of SLC9A6 between endosomes and the plasma membrane. Ubiquitinated (in vitro). Post-translationally, glycosylated. As to expression, ubiquitous. High expression in brain, skeletal muscle, and heart, but is also detected at lower levels in most other tissues.

The protein resides in the endosome membrane. The protein localises to the recycling endosome membrane. Its subcellular location is the early endosome membrane. It localises to the late endosome membrane. It is found in the cell membrane. The catalysed reaction is Na(+)(in) + H(+)(out) = Na(+)(out) + H(+)(in). It catalyses the reaction K(+)(in) + H(+)(out) = K(+)(out) + H(+)(in). In terms of biological role, endosomal Na(+), K(+)/H(+) antiporter. Mediates the electroneutral exchange of endosomal luminal H(+) for a cytosolic Na(+) or K(+). By facilitating proton efflux, SLC9A6 counteracts the acidity generated by vacuolar (V)-ATPase, thereby limiting luminal acidification. Responsible for alkalizing and maintaining the endosomal pH, and consequently in, e.g., endosome maturation and trafficking of recycling endosomal cargo. Plays a critical role during neurodevelopment by regulating synaptic development and plasticity. Implicated in the maintenance of cell polarity in a manner that is dependent on its ability to modulate intravesicular pH. Regulates intracelular pH in some specialized cells, osteoclasts and stereocilia where this transporter localizes to the plasma membrane. This is Sodium/hydrogen exchanger 6 from Homo sapiens (Human).